Here is a 246-residue protein sequence, read N- to C-terminus: Orotidine 5'-phosphate decarboxylase (246 aa).

Residues D22, K44, 71-80, T131, R192, Q201, G221, and R222 each bind substrate; that span reads DLKFHDIPNT. The active-site Proton donor is the K73.

It belongs to the OMP decarboxylase family. Type 1 subfamily. Homodimer.

It carries out the reaction orotidine 5'-phosphate + H(+) = UMP + CO2. The protein operates within pyrimidine metabolism; UMP biosynthesis via de novo pathway; UMP from orotate: step 2/2. Catalyzes the decarboxylation of orotidine 5'-monophosphate (OMP) to uridine 5'-monophosphate (UMP). This is Orotidine 5'-phosphate decarboxylase from Yersinia enterocolitica serotype O:8 / biotype 1B (strain NCTC 13174 / 8081).